The chain runs to 373 residues: Peroxisomal biogenesis factor 3 (373 aa).

Residues 1-15 (MLRSVWNFLKRHKKK) lie on the Cytoplasmic side of the membrane. The segment at 1 to 45 (MLRSVWNFLKRHKKKCIFLGTVLGGVYILGKYGQKKIREIQEREA) is targeting to peroxisomes. Residues 16–36 (CIFLGTVLGGVYILGKYGQKK) form a helical membrane-spanning segment. Residues 37 to 116 (IREIQEREAA…LKIISFTRST (80 aa)) lie on the Peroxisomal side of the membrane. A helical transmembrane segment spans residues 117 to 140 (VAVYSTCMLVVLLRVQLNIIGGYI). The tract at residues 120–136 (YSTCMLVVLLRVQLNII) is interaction with PEX19. Topologically, residues 141-373 (YLDNAAVGKN…AFSTPQQLEK (233 aa)) are cytoplasmic.

This sequence belongs to the peroxin-3 family. As to quaternary structure, interacts with PEX19. As to expression, found in all examined tissues.

The protein resides in the peroxisome membrane. In terms of biological role, involved in peroxisome biosynthesis and integrity. Assembles membrane vesicles before the matrix proteins are translocated. As a docking factor for PEX19, is necessary for the import of peroxisomal membrane proteins in the peroxisomes. The protein is Peroxisomal biogenesis factor 3 (PEX3) of Homo sapiens (Human).